Here is a 992-residue protein sequence, read N- to C-terminus: UPF0182 protein Mb3215c (992 aa).

The next 7 helical transmembrane spans lie at R17–A39, L59–L81, L113–A135, L169–I191, L212–L229, V255–I277, and I284–I306. The tract at residues P906–P938 is disordered. Residues P912–P938 show a composition bias toward pro residues.

It belongs to the UPF0182 family.

The protein resides in the cell membrane. The chain is UPF0182 protein Mb3215c from Mycobacterium bovis (strain ATCC BAA-935 / AF2122/97).